A 1866-amino-acid polypeptide reads, in one-letter code: Protein NLRC5 (1866 aa).

Residues 105-135 are disordered; the sequence is GAEGKSQPESQLHHGLKRPHQSCGSSPRRKQ. The NACHT domain maps to 222–539; sequence RVTVLLGKAG…PKVNKDTLTQ (318 aa). 228 to 235 lines the ATP pocket; it reads GKAGMGKT. LRR repeat units follow at residues 599–622, 713–737, 741–765, 769–792, 869–892, 897–921, 930–953, 976–1000, 1004–1026, 1031–1058, 1138–1161, 1162–1184, 1242–1265, 1272–1294, 1462–1488, 1493–1516, 1521–1544, 1554–1577, 1578–1600, 1605–1628, 1633–1656, 1661–1684, 1687–1714, 1715–1739, 1741–1762, and 1795–1818; these read LKKL…VDET, MGRL…LVKA, CPQL…IVEV, LPRL…CLAR, GPHL…LMAE, LHIA…VLRA, ELHI…EQKG, SRRM…ALGG, LGHL…RLAQ, LGAL…CFST, LELQ…CLPQ, LPQL…FLLA, CKDL…CLLE, ISGL…LLET, CARL…LLQS, LSEL…HLAS, CHHL…ALMR, RLDL…LSQM, TCLQ…HLSE, ATSL…HLAT, LPEL…QLAE, CRRL…GLAQ, PQHL…ALDG, SPHL…CMEL, LLRQ…LLTS, and MGRL…LLAE.

Belongs to the NLRP family. In terms of assembly, interacts with CHUK and IKBKB; prevents CHUK and IKBKB phosphorylation and inhibits their kinase activity. Interacts with RIGI and IFIH1; blocks the interaction of MAVS to RIGI. Expressed in spleen, thymus, lung, brain, tonsil, heart and prostate.

It is found in the cytoplasm. Its function is as follows. Probable regulator of the NF-kappa-B and type I interferon signaling pathways. May also regulate the type II interferon signaling pathway. Plays a role in homeostatic control of innate immunity and in antiviral defense mechanisms. The polypeptide is Protein NLRC5 (NLRC5) (Homo sapiens (Human)).